We begin with the raw amino-acid sequence, 393 residues long: UDP-sulfoquinovose synthase (393 aa).

NAD(+) contacts are provided by residues 31–35, 74–75, Arg100, and Asn118; these read DNLST and DI. A substrate-binding site is contributed by Arg100. Residues Thr144 and Tyr182 each contribute to the substrate site. Residue Thr144 is part of the active site. Residues Tyr182 and Lys186 each coordinate NAD(+). The active-site Proton acceptor is the Tyr182. The active site involves Lys186. Gln209 provides a ligand contact to substrate. Val212 contacts NAD(+). Substrate contacts are provided by residues 238-241, 253-255, and 326-328; these read VVNR, TVY, and RVE.

This sequence belongs to the NAD(P)-dependent epimerase/dehydratase family. NAD(+) serves as cofactor.

It carries out the reaction sulfite + UDP-alpha-D-glucose + H(+) = UDP-alpha-D-6-sulfoquinovose + H2O. Functionally, catalyzes the biosynthesis of UDP-sulfoquinovose by the transfer of sulfite to UDP-glucose. Important for the assembly of the S-layer N-glycans. The reaction probably occurs through an NAD(+)-dependent oxidation/dehydration/enolization/sulfite addition process. In vitro, in the absence of sulfite, UDP-D-glucose is converted via UDP-4-keto-D-glucose to UDP-D-glucose-5,6-ene. This is UDP-sulfoquinovose synthase from Sulfolobus acidocaldarius (strain ATCC 33909 / DSM 639 / JCM 8929 / NBRC 15157 / NCIMB 11770).